The following is a 108-amino-acid chain: MNAANAVKYPELKIKLESYDSTLLDLTTKKIVEVVKGVDVKIKGPLPLPTKKEVITIIRSPHVDKASREQFEKNRHKRLMILVDVNQGAIDSLKRIKIPVGVTLRFSK.

Belongs to the universal ribosomal protein uS10 family. In terms of assembly, part of the 30S ribosomal subunit.

Its function is as follows. Involved in the binding of tRNA to the ribosomes. The polypeptide is Small ribosomal subunit protein uS10 (Mycoplasma pneumoniae (strain ATCC 29342 / M129 / Subtype 1) (Mycoplasmoides pneumoniae)).